The sequence spans 112 residues: Ribonuclease P protein component (112 aa).

It belongs to the RnpA family. As to quaternary structure, consists of a catalytic RNA component (M1 or rnpB) and a protein subunit.

The enzyme catalyses Endonucleolytic cleavage of RNA, removing 5'-extranucleotides from tRNA precursor.. Its function is as follows. RNaseP catalyzes the removal of the 5'-leader sequence from pre-tRNA to produce the mature 5'-terminus. It can also cleave other RNA substrates such as 4.5S RNA. The protein component plays an auxiliary but essential role in vivo by binding to the 5'-leader sequence and broadening the substrate specificity of the ribozyme. This chain is Ribonuclease P protein component, found in Pelotomaculum thermopropionicum (strain DSM 13744 / JCM 10971 / SI).